Reading from the N-terminus, the 155-residue chain is 6,7-dimethyl-8-ribityllumazine synthase (155 aa).

5-amino-6-(D-ribitylamino)uracil-binding positions include phenylalanine 24, 58 to 60 (AFE), and 82 to 84 (AII). 87-88 (ST) serves as a coordination point for (2S)-2-hydroxy-3-oxobutyl phosphate. Catalysis depends on histidine 90, which acts as the Proton donor. Phenylalanine 115 serves as a coordination point for 5-amino-6-(D-ribitylamino)uracil. Position 129 (arginine 129) interacts with (2S)-2-hydroxy-3-oxobutyl phosphate.

It belongs to the DMRL synthase family.

It carries out the reaction (2S)-2-hydroxy-3-oxobutyl phosphate + 5-amino-6-(D-ribitylamino)uracil = 6,7-dimethyl-8-(1-D-ribityl)lumazine + phosphate + 2 H2O + H(+). It functions in the pathway cofactor biosynthesis; riboflavin biosynthesis; riboflavin from 2-hydroxy-3-oxobutyl phosphate and 5-amino-6-(D-ribitylamino)uracil: step 1/2. Catalyzes the formation of 6,7-dimethyl-8-ribityllumazine by condensation of 5-amino-6-(D-ribitylamino)uracil with 3,4-dihydroxy-2-butanone 4-phosphate. This is the penultimate step in the biosynthesis of riboflavin. The polypeptide is 6,7-dimethyl-8-ribityllumazine synthase (Chlorobium phaeobacteroides (strain BS1)).